The primary structure comprises 205 residues: GTP cyclohydrolase-2 (205 aa).

49–53 (RIHSE) contacts GTP. Positions 54, 65, and 67 each coordinate Zn(2+). GTP is bound by residues Gln-70, 92–94 (EGR), and Thr-114. Asp-126 serves as the catalytic Proton acceptor. Catalysis depends on Arg-128, which acts as the Nucleophile. GTP contacts are provided by Thr-149 and Lys-154.

This sequence belongs to the GTP cyclohydrolase II family. The cofactor is Zn(2+).

It catalyses the reaction GTP + 4 H2O = 2,5-diamino-6-hydroxy-4-(5-phosphoribosylamino)-pyrimidine + formate + 2 phosphate + 3 H(+). The protein operates within cofactor biosynthesis; riboflavin biosynthesis; 5-amino-6-(D-ribitylamino)uracil from GTP: step 1/4. In terms of biological role, catalyzes the conversion of GTP to 2,5-diamino-6-ribosylamino-4(3H)-pyrimidinone 5'-phosphate (DARP), formate and pyrophosphate. In Shewanella denitrificans (strain OS217 / ATCC BAA-1090 / DSM 15013), this protein is GTP cyclohydrolase-2.